Consider the following 238-residue polypeptide: Oil body-associated protein 1A (238 aa).

The protein belongs to the OBAP family. In terms of tissue distribution, expressed in seeds, but not in leaves or roots. Highest expression in scutellum. Detected in embryo axis and endosperm.

It localises to the lipid droplet. This Zea mays (Maize) protein is Oil body-associated protein 1A.